We begin with the raw amino-acid sequence, 255 residues long: UPF0246 protein Caul_4480 (255 aa).

Belongs to the UPF0246 family.

The protein is UPF0246 protein Caul_4480 of Caulobacter sp. (strain K31).